The primary structure comprises 385 residues: Glutamate 5-kinase (385 aa).

Lys-18 provides a ligand contact to ATP. Residues Ser-57, Asp-144, and Asn-156 each contribute to the substrate site. 218-224 (TGGMKSK) provides a ligand contact to ATP. The region spanning 283–361 (RGVLSIDAGA…SRIEQVLGHK (79 aa)) is the PUA domain.

Belongs to the glutamate 5-kinase family.

The protein resides in the cytoplasm. The catalysed reaction is L-glutamate + ATP = L-glutamyl 5-phosphate + ADP. It functions in the pathway amino-acid biosynthesis; L-proline biosynthesis; L-glutamate 5-semialdehyde from L-glutamate: step 1/2. Catalyzes the transfer of a phosphate group to glutamate to form L-glutamate 5-phosphate. This is Glutamate 5-kinase from Syntrophus aciditrophicus (strain SB).